Reading from the N-terminus, the 493-residue chain is EGF-containing fibulin-like extracellular matrix protein 1 (493 aa).

The first 17 residues, 1-17 (MLKALFLTMLTLALVKS), serve as a signal peptide directing secretion. The 46-residue stretch at 26–71 (YTQCTDGYEWDPVRQQCKDIDECDIVPDACKGGMKCVNHYGGYLCL) folds into the EGF-like 1; atypical domain. Positions 173–213 (DIDECTAGTHNCRADQVCINLRGSFACQCPPGYQKRGEQCV) constitute an EGF-like 2; calcium-binding domain. 15 disulfide bridges follow: Cys-177/Cys-190, Cys-184/Cys-199, Cys-201/Cys-212, Cys-218/Cys-228, Cys-224/Cys-237, Cys-239/Cys-252, Cys-258/Cys-268, Cys-264/Cys-277, Cys-279/Cys-292, Cys-298/Cys-309, Cys-305/Cys-318, Cys-320/Cys-332, Cys-338/Cys-350, Cys-344/Cys-359, and Cys-365/Cys-377. An EGF-like 3; calcium-binding domain is found at 214-253 (DIDECTIPPYCHQRCVNTPGSFYCQCSPGFQLAANNYTCV). Asn-249 carries an N-linked (GlcNAc...) asparagine glycan. Residues 254–293 (DINECDASNQCAQQCYNILGSFICQCNQGYELSSDRLNCE) form the EGF-like 4; calcium-binding domain. The mediates interaction with TIMP3 stretch occupies residues 259–493 (DASNQCAQQC…LTIIVGPFSF (235 aa)). In terms of domain architecture, EGF-like 5; calcium-binding spans 294–333 (DIDECRTSSYLCQYQCVNEPGKFSCMCPQGYQVVRSRTCQ). Positions 334–378 (DINECETTNECREDEMCWNYHGGFRCYPRNPCQDPYILTPENRCV) constitute an EGF-like 6; calcium-binding domain.

This sequence belongs to the fibulin family. Interacts with ECM1. Interacts with TIMP3. In terms of tissue distribution, in the eye, associated with photoreceptor outer and inner segment regions, the nerve fiber layer, outer nuclear layer and inner and outer plexiform layers of the retina.

It localises to the secreted. Its subcellular location is the extracellular space. It is found in the extracellular matrix. Functionally, binds EGFR, the EGF receptor, inducing EGFR autophosphorylation and the activation of downstream signaling pathways. May play a role in cell adhesion and migration. May function as a negative regulator of chondrocyte differentiation. In the olfactory epithelium, it may regulate glial cell migration, differentiation and the ability of glial cells to support neuronal neurite outgrowth. This is EGF-containing fibulin-like extracellular matrix protein 1 (EFEMP1) from Homo sapiens (Human).